A 147-amino-acid polypeptide reads, in one-letter code: UPF0306 protein YhbP (147 aa).

It belongs to the UPF0306 family.

In Escherichia coli O6:K15:H31 (strain 536 / UPEC), this protein is UPF0306 protein YhbP.